The chain runs to 643 residues: Inorganic pyrophosphatase TTM1 (643 aa).

Residues 1–15 constitute a mitochondrion transit peptide; sequence MALDSSVALSPRRRH. The CYTH domain maps to 248–410; it reads NPTYILKSSK…PHTYIEQIQL (163 aa). A helical membrane pass occupies residues 618–638; it reads LESSTVPILLGLAIGCVGIFA.

It depends on Mg(2+) as a cofactor. As to expression, ubiquitously expressed in all tissues, with strong expression detected in senescent leaves.

The protein resides in the mitochondrion outer membrane. It carries out the reaction diphosphate + H2O = 2 phosphate + H(+). Its function is as follows. Exhibits pyrophosphatase activity with stronger affinity for pyrophosphate (PPi), moderate affinity for ATP and ADP, and weak affinity for tripolyphosphate (PPPi). No activity observed toward uridine substrate. Positively regulates natural and dark-induced leaf senescence. The polypeptide is Inorganic pyrophosphatase TTM1 (Arabidopsis thaliana (Mouse-ear cress)).